The primary structure comprises 520 residues: Cyclic AMP-responsive element-binding protein 3-like protein 2 (520 aa).

Over 1–379 the chain is Cytoplasmic; that stretch reads MEVLESGEQG…KLAGTQTGTC (379 aa). At Ser-93 the chain carries Phosphoserine. Residue Lys-178 forms a Glycyl lysine isopeptide (Lys-Gly) (interchain with G-Cter in SUMO2) linkage. Residue Ser-191 is modified to Phosphoserine. The interval 195–264 is disordered; that stretch reads APVDHLHLPP…PHKLQGSGPL (70 aa). Composition is skewed to low complexity over residues 208-220 and 234-255; these read SSHG…SLSP and SPSR…LTAP. Residues 294-357 enclose the bZIP domain; it reads ALKKIRRKIK…RTLLQQLQKL (64 aa). Positions 296–325 are basic motif; that stretch reads KKIRRKIKNKISAQESRRKKKEYMDSLEKK. Positions 336–357 are leucine-zipper; that stretch reads LRKKVEVLENTNRTLLQQLQKL. Residues 380–400 traverse the membrane as a helical; Signal-anchor for type II membrane protein segment; the sequence is LMVVVLCFAVAFGSFFQGYGP. At 401–520 the chain is on the lumenal side; it reads YPSATKMALP…ELDRRVNTTF (120 aa). Residues 427-430 carry the S1P recognition motif; that stretch reads RNLL. Asn-480, Asn-504, and Asn-517 each carry an N-linked (GlcNAc...) asparagine glycan.

It belongs to the bZIP family. ATF subfamily. As to quaternary structure, binds DNA as a dimer. In terms of processing, upon ER stress, translocated to the Golgi apparatus, where it is processed by regulated intramembrane proteolysis (RIP) to release the cytosol-facing N-terminal transcription factor domain. The cleavage is performed sequentially by site-1 and site-2 proteases (S1P/MBTPS1 and S2P/MBTPS2). N-glycosylated. Post-translationally, ubiquitinated by HRD1/SYVN1; undergoes 'Lys-48'-linked ubiquitination, followed by rapid proteasomal degradation under normal conditions. Upon ER stress, SYVN1 E3 ubiquitin-protein ligase dissociates from its substrate, ubiquitination does not occur and CREB3L2 is stabilized. As to expression, widely expressed with highest levels in placenta, lung, spleen and intestine, and lowest levels in heart, brain, skeletal muscle, thymus, colon and leukocytes. In fetal tissues, the weakest expression is detected in brain and heart.

The protein localises to the endoplasmic reticulum membrane. The protein resides in the nucleus. In terms of biological role, transcription factor involved in unfolded protein response (UPR). In the absence of endoplasmic reticulum (ER) stress, inserted into ER membranes, with N-terminal DNA-binding and transcription activation domains oriented toward the cytosolic face of the membrane. In response to ER stress, transported to the Golgi, where it is cleaved in a site-specific manner by resident proteases S1P/MBTPS1 and S2P/MBTPS2. The released N-terminal cytosolic domain is translocated to the nucleus to effect transcription of specific target genes. Plays a critical role in chondrogenesis by activating the transcription of SEC23A, which promotes the transport and secretion of cartilage matrix proteins, and possibly that of ER biogenesis-related genes. In a neuroblastoma cell line, protects cells from ER stress-induced death. In vitro activates transcription of target genes via direct binding to the CRE site. This is Cyclic AMP-responsive element-binding protein 3-like protein 2 (CREB3L2) from Homo sapiens (Human).